A 193-amino-acid chain; its full sequence is MKNSSIVLASASPRRSELLESAGIQFRVVPADINEEPFPGEEPVDHVQRLAEGKARAAAELAEGRFFLGADTIVLCDGEIMGKPKDAADAKRMLNKLSGVPHEVVTGFAIYDRERKGAVVEAIRTKVFFKKLRDEEILDYIATGCPFDKAGAYAIQGGAAHMVQKIEGSYTNVVGLPLCEVVDALRVIGALGN.

D71 serves as the catalytic Proton acceptor.

It belongs to the Maf family. YhdE subfamily. Requires a divalent metal cation as cofactor.

It is found in the cytoplasm. It catalyses the reaction dTTP + H2O = dTMP + diphosphate + H(+). The enzyme catalyses UTP + H2O = UMP + diphosphate + H(+). Functionally, nucleoside triphosphate pyrophosphatase that hydrolyzes dTTP and UTP. May have a dual role in cell division arrest and in preventing the incorporation of modified nucleotides into cellular nucleic acids. The sequence is that of dTTP/UTP pyrophosphatase from Citrifermentans bemidjiense (strain ATCC BAA-1014 / DSM 16622 / JCM 12645 / Bem) (Geobacter bemidjiensis).